An 82-amino-acid chain; its full sequence is RNA-binding protein BPUM_0095 (82 aa).

It belongs to the eukaryotic ribosomal protein eL8 family.

The sequence is that of RNA-binding protein BPUM_0095 from Bacillus pumilus (strain SAFR-032).